The sequence spans 391 residues: 3-ketoacyl-CoA thiolase (391 aa).

The Acyl-thioester intermediate role is filled by cysteine 95. Residues histidine 347 and cysteine 377 each act as proton acceptor in the active site.

It belongs to the thiolase-like superfamily. Thiolase family. Heterotetramer of two alpha chains (FadB) and two beta chains (FadA).

It localises to the cytoplasm. It carries out the reaction an acyl-CoA + acetyl-CoA = a 3-oxoacyl-CoA + CoA. Its pathway is lipid metabolism; fatty acid beta-oxidation. Its function is as follows. Catalyzes the final step of fatty acid oxidation in which acetyl-CoA is released and the CoA ester of a fatty acid two carbons shorter is formed. This Stutzerimonas stutzeri (strain A1501) (Pseudomonas stutzeri) protein is 3-ketoacyl-CoA thiolase.